We begin with the raw amino-acid sequence, 211 residues long: Uracil phosphoribosyltransferase (211 aa).

Residues arginine 79, arginine 104, and 131–139 (DPMLATGGS) contribute to the 5-phospho-alpha-D-ribose 1-diphosphate site. Residues isoleucine 196 and 201 to 203 (GDA) each bind uracil. Aspartate 202 is a 5-phospho-alpha-D-ribose 1-diphosphate binding site.

This sequence belongs to the UPRTase family. Mg(2+) is required as a cofactor.

It catalyses the reaction UMP + diphosphate = 5-phospho-alpha-D-ribose 1-diphosphate + uracil. It functions in the pathway pyrimidine metabolism; UMP biosynthesis via salvage pathway; UMP from uracil: step 1/1. With respect to regulation, allosterically activated by GTP. In terms of biological role, catalyzes the conversion of uracil and 5-phospho-alpha-D-ribose 1-diphosphate (PRPP) to UMP and diphosphate. This is Uracil phosphoribosyltransferase from Lactococcus lactis subsp. lactis (strain IL1403) (Streptococcus lactis).